Here is a 656-residue protein sequence, read N- to C-terminus: PAN2-PAN3 deadenylation complex subunit PAN3 (656 aa).

A C3H1-type zinc finger spans residues 15–44 (SFKGTQCRNIIIHGYCKFENEGCQFNHGNS). Residues 71–104 (KTSSSFTPGKSPAVRSPDFSSLPAFQPGAPVNDQ) are disordered. Positions 128–148 (AFAPSFNPYASESFTPSVSAG) match the PABPC-interacting motif-2 (PAM-2) motif. The interval 271-525 (QVFPRGSLPD…NIEDFTKLFS (255 aa)) is pseudokinase domain. ATP contacts are provided by residues arginine 325, 375–382 (DYYPQSQS), and 428–429 (KK). Residues 526–564 (HKVLSVVNSLQYNSEYLEQQLSRELENARLFRLMCKLNA) are a coiled coil. Residues 565 to 656 (IYGRLESRID…IDSTFRALTQ (92 aa)) form a knob domain region.

The protein belongs to the protein kinase superfamily. PAN3 family. Homodimer. Forms a heterotrimer with a catalytic subunit PAN2 to form the poly(A)-nuclease (PAN) deadenylation complex. Interacts (via PAM-2 motif) with poly(A)-binding protein PAB1 (via PABC domain), conferring substrate specificity of the enzyme complex.

Its subcellular location is the cytoplasm. In terms of biological role, regulatory subunit of the poly(A)-nuclease (PAN) deadenylation complex, one of two cytoplasmic mRNA deadenylases involved in mRNA turnover. PAN specifically shortens poly(A) tails of RNA and the activity is stimulated by poly(A)-binding protein PAB1. PAN deadenylation is followed by rapid degradation of the shortened mRNA tails by the CCR4-NOT complex. Deadenylated mRNAs are then degraded by two alternative mechanisms, namely exosome-mediated 3'-5' exonucleolytic degradation, or deadenylation-dependent mRNA decaping and subsequent 5'-3' exonucleolytic degradation by XRN1. May also be involved in post-transcriptional maturation of mRNA poly(A) tails. PAN3 acts as a positive regulator for PAN activity, recruiting the catalytic subunit PAN2 to mRNA via its interaction with RNA and with PAB1. The polypeptide is PAN2-PAN3 deadenylation complex subunit PAN3 (Kluyveromyces lactis (strain ATCC 8585 / CBS 2359 / DSM 70799 / NBRC 1267 / NRRL Y-1140 / WM37) (Yeast)).